Here is a 246-residue protein sequence, read N- to C-terminus: Thiamine import ATP-binding protein ThiQ (246 aa).

The ABC transporter domain maps to 10–239 (VKLDALAFAY…QGPPAFARYL (230 aa)). 41–48 (GPSGSGKS) contributes to the ATP binding site.

The protein belongs to the ABC transporter superfamily. Thiamine importer (TC 3.A.1.19.1) family. In terms of assembly, the complex is composed of two ATP-binding proteins (ThiQ), two transmembrane proteins (ThiP) and a solute-binding protein (ThiB).

The protein resides in the cell inner membrane. The catalysed reaction is thiamine(out) + ATP + H2O = thiamine(in) + ADP + phosphate + H(+). Functionally, part of the ABC transporter complex ThiBPQ involved in thiamine import. Responsible for energy coupling to the transport system. The chain is Thiamine import ATP-binding protein ThiQ from Chelativorans sp. (strain BNC1).